The primary structure comprises 352 residues: Galactokinase (352 aa).

17-20 (EHTD) lines the substrate pocket. ATP contacts are provided by residues S49 and 101–107 (GAGLSSS). Positions 107 and 139 each coordinate Mg(2+). Catalysis depends on D151, which acts as the Proton acceptor. Y200 is a substrate binding site.

Belongs to the GHMP kinase family. GalK subfamily. Monomer.

The protein resides in the cytoplasm. The catalysed reaction is alpha-D-galactose + ATP = alpha-D-galactose 1-phosphate + ADP + H(+). Its pathway is carbohydrate metabolism; galactose metabolism. Functionally, catalyzes the transfer of the gamma-phosphate of ATP to D-galactose to form alpha-D-galactose-1-phosphate (Gal-1-P). Is very specific for its substrate, since it is not able to use D-glucose, D-fructose, D-mannose, 2-deoxy-D-glucose, and D-glucosamine as substrates. In Pyrococcus furiosus (strain ATCC 43587 / DSM 3638 / JCM 8422 / Vc1), this protein is Galactokinase.